The primary structure comprises 150 residues: Galectin-1 (150 aa).

The region spanning 9 to 141 is the Galectin domain; the sequence is NQIKLQDDFK…FSSPVTVDIH (133 aa). A carbohydrate contacts are provided by His51, Arg55, Asn64, and Glu75.

In terms of assembly, homotetramer. Oligomerization is required for carbohydrate binding. Most abundant in fruiting bodies. Very low levels of expression in asexual vegetative mycelia.

It localises to the secreted. Its subcellular location is the extracellular space. It is found in the extracellular matrix. The protein resides in the cell wall. The protein localises to the endomembrane system. Its function is as follows. Binds lactose. May play a role in fruiting body formation. The sequence is that of Galectin-1 (Cgl1) from Coprinopsis cinerea (strain Okayama-7 / 130 / ATCC MYA-4618 / FGSC 9003) (Inky cap fungus).